We begin with the raw amino-acid sequence, 249 residues long: 5'-nucleotidase SurE (249 aa).

Asp9, Asp10, Ser40, and Asn92 together coordinate a divalent metal cation.

Belongs to the SurE nucleotidase family. A divalent metal cation is required as a cofactor.

Its subcellular location is the cytoplasm. It catalyses the reaction a ribonucleoside 5'-phosphate + H2O = a ribonucleoside + phosphate. Nucleotidase that shows phosphatase activity on nucleoside 5'-monophosphates. This chain is 5'-nucleotidase SurE, found in Shewanella putrefaciens (strain CN-32 / ATCC BAA-453).